The following is a 927-amino-acid chain: Tubulin monoglycylase TTLL3 (927 aa).

Over residues 35 to 47 (RSQPSELRTNFSS) the composition is skewed to polar residues. Disordered regions lie at residues 35–113 (RSQP…PQPV) and 194–227 (HPPG…EENE). Residues 216 to 226 (DATEDEDEEEN) are compositionally biased toward acidic residues. The TTL domain maps to 345 to 702 (VLKLVVKLEE…DRRLDRSCDT (358 aa)). Residues Lys476, 482-483 (RG), 514-517 (QKYI), 527-529 (KFD), and 571-572 (CN) each bind ATP. Residue Arg482 participates in a protein binding. Positions 649, 662, and 664 each coordinate Mg(2+). Glu662 serves as a coordination point for ATP. Disordered stretches follow at residues 735–799 (VPVG…SGKG) and 897–927 (EEGH…KTET). A compositionally biased stretch (polar residues) spans 752–769 (LTQQGSGESKDSGSPTHR). Residues 776 to 788 (ARAESLEHTEKPE) show a composition bias toward basic and acidic residues. The segment covering 916-927 (LSSTEPCSKTET) has biased composition (polar residues).

Requires Mg(2+) as cofactor. Highly expressed in brain and testis. Expressed in heart, kidney, liver, lung, muscle, spleen, trachea and colon. Expressed in sperm flagellum. In the brain, specifically expressed in ependymal cilia.

It is found in the cytoplasm. The protein localises to the cytoskeleton. It localises to the cell projection. Its subcellular location is the cilium. The protein resides in the cilium axoneme. It is found in the flagellum axoneme. It carries out the reaction L-glutamyl-[protein] + glycine + ATP = glycyl-L-glutamyl-[protein] + ADP + phosphate + H(+). Monoglycylase which modifies alpha- and beta-tubulin, adding a single glycine on the gamma-carboxyl groups of specific glutamate residues to generate monoglycine side chains within the C-terminal tail of tubulin. Not involved in elongation step of the polyglycylation reaction. Preferentially glycylates a beta-tail peptide over the alpha-tail, although shifts its preference toward alpha-tail as beta-tail glutamylation increases. Competes with polyglutamylases for modification site on beta-tubulin substrate, thereby creating an anticorrelation between glycylation and glutamylation reactions. Together with TTLL8, mediates microtubule glycylation of primary and motile cilia, which is essential for their stability and maintenance. Involved in microtubule glycylation of primary cilia in colon which controls cell proliferation of epithelial cells and plays an essential role in colon cancer development. Together with TTLL8, glycylates sperm flagella which regulates axonemal dynein motor activity, thereby controlling flagellar beat, directional sperm swimming and male fertility. This Mus musculus (Mouse) protein is Tubulin monoglycylase TTLL3.